A 357-amino-acid chain; its full sequence is Dual-specificity RNA methyltransferase RlmN (357 aa).

Glu-89 acts as the Proton acceptor in catalysis. The Radical SAM core domain maps to 109–340; it reads EREKYTVCVS…CTIRESKALD (232 aa). A disulfide bridge links Cys-116 with Cys-345. [4Fe-4S] cluster is bound by residues Cys-123, Cys-127, and Cys-130. Residues 173 to 174, Ser-203, 226 to 228, and Asn-302 contribute to the S-adenosyl-L-methionine site; these read GE and SLH. Catalysis depends on Cys-345, which acts as the S-methylcysteine intermediate.

Belongs to the radical SAM superfamily. RlmN family. The cofactor is [4Fe-4S] cluster.

The protein resides in the cytoplasm. The catalysed reaction is adenosine(2503) in 23S rRNA + 2 reduced [2Fe-2S]-[ferredoxin] + 2 S-adenosyl-L-methionine = 2-methyladenosine(2503) in 23S rRNA + 5'-deoxyadenosine + L-methionine + 2 oxidized [2Fe-2S]-[ferredoxin] + S-adenosyl-L-homocysteine. It carries out the reaction adenosine(37) in tRNA + 2 reduced [2Fe-2S]-[ferredoxin] + 2 S-adenosyl-L-methionine = 2-methyladenosine(37) in tRNA + 5'-deoxyadenosine + L-methionine + 2 oxidized [2Fe-2S]-[ferredoxin] + S-adenosyl-L-homocysteine. In terms of biological role, specifically methylates position 2 of adenine 2503 in 23S rRNA and position 2 of adenine 37 in tRNAs. m2A2503 modification seems to play a crucial role in the proofreading step occurring at the peptidyl transferase center and thus would serve to optimize ribosomal fidelity. This Helicobacter pylori (strain ATCC 700392 / 26695) (Campylobacter pylori) protein is Dual-specificity RNA methyltransferase RlmN.